Reading from the N-terminus, the 237-residue chain is UPF0280 protein Mpal_1292 (237 aa).

Belongs to the UPF0280 family.

This Methanosphaerula palustris (strain ATCC BAA-1556 / DSM 19958 / E1-9c) protein is UPF0280 protein Mpal_1292.